The chain runs to 579 residues: Tetratricopeptide repeat protein 39C (579 aa).

Residues 182 to 197 show a composition bias toward polar residues; it reads QQGALASDQANHNTST. Residues 182-202 are disordered; that stretch reads QQGALASDQANHNTSTGSGGR. TPR repeat units lie at residues 311-344, 349-382, and 481-514; these read SLFI…ASDQ, HVCL…SRWS, and GLKH…EYGR.

This sequence belongs to the TTC39 family.

This is Tetratricopeptide repeat protein 39C (ttc39c) from Danio rerio (Zebrafish).